The primary structure comprises 353 residues: Thiamine-phosphate synthase (353 aa).

The interval 1-128 (MESMPVAPST…ARTAAAVRYA (128 aa)) is unknown. The interval 129–353 (LYDHEVRILE…ASRQLLDLLT (225 aa)) is thiamine-phosphate synthase. Residues 185 to 189 (QYRRK) and Asn217 contribute to the 4-amino-2-methyl-5-(diphosphooxymethyl)pyrimidine site. Mg(2+) is bound by residues Asp218 and Asp237. Ser256 contributes to the 4-amino-2-methyl-5-(diphosphooxymethyl)pyrimidine binding site. 282–284 (TAT) provides a ligand contact to 2-[(2R,5Z)-2-carboxy-4-methylthiazol-5(2H)-ylidene]ethyl phosphate. Lys285 is a 4-amino-2-methyl-5-(diphosphooxymethyl)pyrimidine binding site. 2-[(2R,5Z)-2-carboxy-4-methylthiazol-5(2H)-ylidene]ethyl phosphate contacts are provided by residues Gly312 and 332–333 (VS).

Belongs to the thiamine-phosphate synthase family. Mg(2+) is required as a cofactor.

The catalysed reaction is 2-[(2R,5Z)-2-carboxy-4-methylthiazol-5(2H)-ylidene]ethyl phosphate + 4-amino-2-methyl-5-(diphosphooxymethyl)pyrimidine + 2 H(+) = thiamine phosphate + CO2 + diphosphate. It carries out the reaction 2-(2-carboxy-4-methylthiazol-5-yl)ethyl phosphate + 4-amino-2-methyl-5-(diphosphooxymethyl)pyrimidine + 2 H(+) = thiamine phosphate + CO2 + diphosphate. The enzyme catalyses 4-methyl-5-(2-phosphooxyethyl)-thiazole + 4-amino-2-methyl-5-(diphosphooxymethyl)pyrimidine + H(+) = thiamine phosphate + diphosphate. The protein operates within cofactor biosynthesis; thiamine diphosphate biosynthesis; thiamine phosphate from 4-amino-2-methyl-5-diphosphomethylpyrimidine and 4-methyl-5-(2-phosphoethyl)-thiazole: step 1/1. Its function is as follows. Condenses 4-methyl-5-(beta-hydroxyethyl)thiazole monophosphate (THZ-P) and 2-methyl-4-amino-5-hydroxymethyl pyrimidine pyrophosphate (HMP-PP) to form thiamine monophosphate (TMP). The protein is Thiamine-phosphate synthase of Synechococcus sp. (strain WH7803).